Here is a 436-residue protein sequence, read N- to C-terminus: UPF0597 protein YhaM (436 aa).

It belongs to the UPF0597 family.

The chain is UPF0597 protein YhaM from Salmonella paratyphi A (strain ATCC 9150 / SARB42).